Reading from the N-terminus, the 192-residue chain is Peptidyl-tRNA hydrolase (192 aa).

Position 17 (Y17) interacts with tRNA. H22 acts as the Proton acceptor in catalysis. TRNA is bound by residues Y68, N70, and N116.

Belongs to the PTH family. Monomer.

The protein resides in the cytoplasm. It carries out the reaction an N-acyl-L-alpha-aminoacyl-tRNA + H2O = an N-acyl-L-amino acid + a tRNA + H(+). Functionally, hydrolyzes ribosome-free peptidyl-tRNAs (with 1 or more amino acids incorporated), which drop off the ribosome during protein synthesis, or as a result of ribosome stalling. Its function is as follows. Catalyzes the release of premature peptidyl moieties from peptidyl-tRNA molecules trapped in stalled 50S ribosomal subunits, and thus maintains levels of free tRNAs and 50S ribosomes. This Mycobacterium sp. (strain JLS) protein is Peptidyl-tRNA hydrolase.